The sequence spans 479 residues: Aspartyl/glutamyl-tRNA(Asn/Gln) amidotransferase subunit B (479 aa).

The protein belongs to the GatB/GatE family. GatB subfamily. In terms of assembly, heterotrimer of A, B and C subunits.

It carries out the reaction L-glutamyl-tRNA(Gln) + L-glutamine + ATP + H2O = L-glutaminyl-tRNA(Gln) + L-glutamate + ADP + phosphate + H(+). It catalyses the reaction L-aspartyl-tRNA(Asn) + L-glutamine + ATP + H2O = L-asparaginyl-tRNA(Asn) + L-glutamate + ADP + phosphate + 2 H(+). Its function is as follows. Allows the formation of correctly charged Asn-tRNA(Asn) or Gln-tRNA(Gln) through the transamidation of misacylated Asp-tRNA(Asn) or Glu-tRNA(Gln) in organisms which lack either or both of asparaginyl-tRNA or glutaminyl-tRNA synthetases. The reaction takes place in the presence of glutamine and ATP through an activated phospho-Asp-tRNA(Asn) or phospho-Glu-tRNA(Gln). The sequence is that of Aspartyl/glutamyl-tRNA(Asn/Gln) amidotransferase subunit B from Alcanivorax borkumensis (strain ATCC 700651 / DSM 11573 / NCIMB 13689 / SK2).